The following is a 266-amino-acid chain: 3-methyl-2-oxobutanoate hydroxymethyltransferase (266 aa).

Aspartate 46 and aspartate 85 together coordinate Mg(2+). 3-methyl-2-oxobutanoate is bound by residues 46–47, aspartate 85, and lysine 115; that span reads DS. Glutamate 117 lines the Mg(2+) pocket. Glutamate 183 acts as the Proton acceptor in catalysis.

It belongs to the PanB family. Homodecamer; pentamer of dimers. Requires Mg(2+) as cofactor.

It localises to the cytoplasm. The enzyme catalyses 3-methyl-2-oxobutanoate + (6R)-5,10-methylene-5,6,7,8-tetrahydrofolate + H2O = 2-dehydropantoate + (6S)-5,6,7,8-tetrahydrofolate. It participates in cofactor biosynthesis; (R)-pantothenate biosynthesis; (R)-pantoate from 3-methyl-2-oxobutanoate: step 1/2. Functionally, catalyzes the reversible reaction in which hydroxymethyl group from 5,10-methylenetetrahydrofolate is transferred onto alpha-ketoisovalerate to form ketopantoate. This Trichlorobacter lovleyi (strain ATCC BAA-1151 / DSM 17278 / SZ) (Geobacter lovleyi) protein is 3-methyl-2-oxobutanoate hydroxymethyltransferase.